The chain runs to 446 residues: Exodeoxyribonuclease 7 large subunit (446 aa).

This sequence belongs to the XseA family. In terms of assembly, heterooligomer composed of large and small subunits.

It is found in the cytoplasm. It carries out the reaction Exonucleolytic cleavage in either 5'- to 3'- or 3'- to 5'-direction to yield nucleoside 5'-phosphates.. Functionally, bidirectionally degrades single-stranded DNA into large acid-insoluble oligonucleotides, which are then degraded further into small acid-soluble oligonucleotides. The polypeptide is Exodeoxyribonuclease 7 large subunit (Streptococcus gordonii (strain Challis / ATCC 35105 / BCRC 15272 / CH1 / DL1 / V288)).